We begin with the raw amino-acid sequence, 224 residues long: Deoxyguanosine kinase (224 aa).

8 to 16 (GPIGAGKSS) is a binding site for ATP. Substrate is bound by residues Glu32, Tyr44, and Gln55. Asp78 (proton acceptor) is an active-site residue. Substrate contacts are provided by Arg79, Asp84, and Glu149.

The protein belongs to the DCK/DGK family. Heterodimer of a deoxyadenosine (DAK) and a deoxyguanosine kinase (DGK).

It carries out the reaction 2'-deoxyguanosine + ATP = dGMP + ADP + H(+). DGK/DAK plays an essential role in generating the deoxyribonucleotide precursors, dGTP and dATP, for DNA metabolism. In Lactobacillus johnsonii (strain CNCM I-12250 / La1 / NCC 533), this protein is Deoxyguanosine kinase.